The sequence spans 257 residues: Glutamate racemase (257 aa).

Substrate contacts are provided by residues 12–13 (DS) and 44–45 (YG). The Proton donor/acceptor role is filled by Cys-75. Residue 76–77 (NT) participates in substrate binding. Cys-176 serves as the catalytic Proton donor/acceptor. A substrate-binding site is contributed by 177-178 (TH).

This sequence belongs to the aspartate/glutamate racemases family.

It catalyses the reaction L-glutamate = D-glutamate. The protein operates within cell wall biogenesis; peptidoglycan biosynthesis. Functionally, provides the (R)-glutamate required for cell wall biosynthesis. The protein is Glutamate racemase of Thermus thermophilus (strain ATCC 27634 / DSM 579 / HB8).